We begin with the raw amino-acid sequence, 319 residues long: Very-long-chain 3-oxoacyl-CoA reductase-A (319 aa).

The helical transmembrane segment at 17-37 (LFWVGALITASLALYVVYKTI) threads the bilayer. Residue 56–85 (GKWAVVTGATDGIGKSYAEELARRGFSMML) coordinates NADP(+). A run of 2 helical transmembrane segments spans residues 188 to 208 (GVILNISSASGMFPVPLLTIY) and 282 to 302 (AVMGWVTTILAPIDLVLNLGL). Substrate is bound at residue Ser-195. The active-site Proton acceptor is Tyr-208.

This sequence belongs to the short-chain dehydrogenases/reductases (SDR) family. 17-beta-HSD 3 subfamily.

It localises to the endoplasmic reticulum membrane. It catalyses the reaction a very-long-chain (3R)-3-hydroxyacyl-CoA + NADP(+) = a very-long-chain 3-oxoacyl-CoA + NADPH + H(+). The catalysed reaction is 17beta-estradiol + NAD(+) = estrone + NADH + H(+). The enzyme catalyses 17beta-estradiol + NADP(+) = estrone + NADPH + H(+). Its pathway is lipid metabolism; fatty acid biosynthesis. The protein operates within steroid biosynthesis; estrogen biosynthesis. Functionally, catalyzes the second of the four reactions of the long-chain fatty acids elongation cycle. This endoplasmic reticulum-bound enzymatic process, allows the addition of two carbons to the chain of long- and very long-chain fatty acids/VLCFAs per cycle. This enzyme has a 3-ketoacyl-CoA reductase activity, reducing 3-ketoacyl-CoA to 3-hydroxyacyl-CoA, within each cycle of fatty acid elongation. Thereby, it may participate in the production of VLCFAs of different chain lengths that are involved in multiple biological processes as precursors of membrane lipids and lipid mediators. May also catalyze the transformation of estrone (E1) into estradiol (E2) and play a role in estrogen formation. This is Very-long-chain 3-oxoacyl-CoA reductase-A (hsd17b12a) from Danio rerio (Zebrafish).